Reading from the N-terminus, the 340-residue chain is Ketol-acid reductoisomerase (NADP(+)) (340 aa).

Positions 1–183 constitute a KARI N-terminal Rossmann domain; the sequence is MAITVYYDKD…GGGRTGIIET (183 aa). NADP(+) is bound by residues 26–29, R49, S52, S54, and 84–87; these read FGSQ and DEIQ. The active site involves H109. G135 provides a ligand contact to NADP(+). A KARI C-terminal knotted domain is found at 184 to 329; it reads TFKAETETDL…RNLRAMMPWI (146 aa). Mg(2+) is bound by residues D192, E196, E228, and E232. S253 serves as a coordination point for substrate.

Belongs to the ketol-acid reductoisomerase family. It depends on Mg(2+) as a cofactor.

It carries out the reaction (2R)-2,3-dihydroxy-3-methylbutanoate + NADP(+) = (2S)-2-acetolactate + NADPH + H(+). It catalyses the reaction (2R,3R)-2,3-dihydroxy-3-methylpentanoate + NADP(+) = (S)-2-ethyl-2-hydroxy-3-oxobutanoate + NADPH + H(+). It participates in amino-acid biosynthesis; L-isoleucine biosynthesis; L-isoleucine from 2-oxobutanoate: step 2/4. The protein operates within amino-acid biosynthesis; L-valine biosynthesis; L-valine from pyruvate: step 2/4. Functionally, involved in the biosynthesis of branched-chain amino acids (BCAA). Catalyzes an alkyl-migration followed by a ketol-acid reduction of (S)-2-acetolactate (S2AL) to yield (R)-2,3-dihydroxy-isovalerate. In the isomerase reaction, S2AL is rearranged via a Mg-dependent methyl migration to produce 3-hydroxy-3-methyl-2-ketobutyrate (HMKB). In the reductase reaction, this 2-ketoacid undergoes a metal-dependent reduction by NADPH to yield (R)-2,3-dihydroxy-isovalerate. This Campylobacter jejuni (strain RM1221) protein is Ketol-acid reductoisomerase (NADP(+)).